The following is a 368-amino-acid chain: (3S,6E)-nerolidol synthase (368 aa).

Asp-91, Asn-228, and Ser-232 together coordinate Mg(2+). The short motif at Asp-91–Glu-95 is the DDXXE motif element.

The protein belongs to the terpene synthase family. Mg(2+) serves as cofactor. Mn(2+) is required as a cofactor.

It carries out the reaction (2E,6E)-farnesyl diphosphate + H2O = (3S,6E)-nerolidol + diphosphate. The enzyme catalyses (2E)-geranyl diphosphate + H2O = (S)-linalool + diphosphate. Its pathway is secondary metabolite biosynthesis; terpenoid biosynthesis. Functionally, sesquiterpene synthase converting farnesyl diphosphate to nerolidol. Also has a monoterpene synthase activity, converting geranyl diphosphate into linalool as the major product. Has no diterpene synthase activity. In Selaginella moellendorffii (Spikemoss), this protein is (3S,6E)-nerolidol synthase.